Reading from the N-terminus, the 457-residue chain is Aromatic amino acid transport protein AroP (457 aa).

Residues 1 to 18 (MMEGQQHGEQLKRGLKNR) lie on the Cytoplasmic side of the membrane. The helical transmembrane segment at 19 to 39 (HIQLIALGGAIGTGLFLGSAS) threads the bilayer. Residues 40–42 (VIQ) are Periplasmic-facing. Residues 43 to 63 (SAGPGIILGYAIAGFIAFLIM) traverse the membrane as a helical segment. Topologically, residues 64 to 98 (RQLGEMVVEEPVAGSFSHFAYKYWGSFAGFASGWN) are cytoplasmic. A helical transmembrane segment spans residues 99–119 (YWVLYVLVAMAELTAVGKYIQ). Residues 120 to 124 (FWYPE) lie on the Periplasmic side of the membrane. The chain crosses the membrane as a helical span at residues 125 to 145 (IPTWVSAAVFFVVINAINLTN). The Cytoplasmic segment spans residues 146 to 147 (VK). A helical transmembrane segment spans residues 148–168 (VFGEMEFWFAIIKVIAVVAMI). Residues 169-192 (IFGGWLLFSGNGGPQATVSNLWDQ) lie on the Periplasmic side of the membrane. A helical transmembrane segment spans residues 193-213 (GGFLPHGFTGLVMMMAIIMFS). At 214-239 (FGGLELVGITAAEADNPEQSIPKATN) the chain is on the cytoplasmic side. A helical transmembrane segment spans residues 240 to 260 (QVIYRILIFYIGSLAVLLSLM). At 261–279 (PWTRVTADTSPFVLIFHEL) the chain is on the periplasmic side. The chain crosses the membrane as a helical span at residues 280 to 300 (GDTFVANALNIVVLTAALSVY). Topologically, residues 301–330 (NSCVYCNSRMLFGLAQQGNAPKALASVDKR) are cytoplasmic. Residues 331-351 (GVPVNTILVSALVTALCVLIN) traverse the membrane as a helical segment. At 352 to 359 (YLAPESAF) the chain is on the periplasmic side. Residues 360–380 (GLLMALVVSALVINWAMISLA) traverse the membrane as a helical segment. Residues 381–402 (HMKFRRAKQEQGVVTRFPALLY) are Cytoplasmic-facing. A helical transmembrane segment spans residues 403–423 (PLGNWICLLFMAAVLVIMLMT). Residues 424–426 (PGM) lie on the Periplasmic side of the membrane. The chain crosses the membrane as a helical span at residues 427–447 (AISVYLIPVWLIVLGIGYLFK). Residues 448 to 457 (EKTAKAVKAH) are Cytoplasmic-facing.

The protein belongs to the amino acid-polyamine-organocation (APC) superfamily. Amino acid transporter (AAT) (TC 2.A.3.1) family.

The protein resides in the cell inner membrane. The catalysed reaction is L-phenylalanine(in) + H(+)(in) = L-phenylalanine(out) + H(+)(out). It carries out the reaction L-tryptophan(in) + H(+)(in) = L-tryptophan(out) + H(+)(out). The enzyme catalyses L-tyrosine(in) + H(+)(in) = L-tyrosine(out) + H(+)(out). Strong, mutual inhibition of uptake by tyrosine, phenylalanine, and tryptophan. Transport is also inhibited by the aromatic analogs p-fluorophenylalanine, beta-2-thienylalanine and 5-methyltryptophan. Functionally, permease that is involved in the active transport across the cytoplasmic membrane of all three aromatic amino acids, phenylalanine, tyrosine and tryptophan. This chain is Aromatic amino acid transport protein AroP, found in Escherichia coli (strain K12).